We begin with the raw amino-acid sequence, 594 residues long: Potassium-transporting ATPase potassium-binding subunit (594 aa).

The next 10 helical transmembrane spans lie at 3–23, 67–87, 136–156, 179–199, 287–307, 314–334, 415–435, 453–473, 519–539, and 562–582; these read ADFL…APLL, AVAM…LQRL, ALTV…IALV, LYVL…QGVV, LEML…GEMV, VAIL…AAYF, GLYG…LMIG, VALV…VAVL, VLLG…ILAL, and LFVA…YVPA.

This sequence belongs to the KdpA family. The system is composed of three essential subunits: KdpA, KdpB and KdpC.

The protein localises to the cell inner membrane. In terms of biological role, part of the high-affinity ATP-driven potassium transport (or Kdp) system, which catalyzes the hydrolysis of ATP coupled with the electrogenic transport of potassium into the cytoplasm. This subunit binds the periplasmic potassium ions and delivers the ions to the membrane domain of KdpB through an intramembrane tunnel. The polypeptide is Potassium-transporting ATPase potassium-binding subunit (Bordetella parapertussis (strain 12822 / ATCC BAA-587 / NCTC 13253)).